The sequence spans 240 residues: Orotidine 5'-phosphate decarboxylase (240 aa).

Substrate contacts are provided by residues Asp15, Lys37, 64 to 73, Thr127, Arg188, Gln197, Gly217, and Arg218; that span reads DLKYHDIPNT. Lys66 functions as the Proton donor in the catalytic mechanism.

The protein belongs to the OMP decarboxylase family. Type 1 subfamily. In terms of assembly, homodimer.

It carries out the reaction orotidine 5'-phosphate + H(+) = UMP + CO2. It functions in the pathway pyrimidine metabolism; UMP biosynthesis via de novo pathway; UMP from orotate: step 2/2. In terms of biological role, catalyzes the decarboxylation of orotidine 5'-monophosphate (OMP) to uridine 5'-monophosphate (UMP). The polypeptide is Orotidine 5'-phosphate decarboxylase (Citrifermentans bemidjiense (strain ATCC BAA-1014 / DSM 16622 / JCM 12645 / Bem) (Geobacter bemidjiensis)).